Consider the following 415-residue polypeptide: Protein fuzzy homolog (415 aa).

It belongs to the fuzzy family. Component of the CPLANE (ciliogenesis and planar polarity effectors) complex, composed of INTU, FUZ and WDPCP. Interacts with CPLANE1 and CPLANE2.

The protein localises to the cytoplasm. The protein resides in the cytoskeleton. Its subcellular location is the cilium basal body. Functionally, probable planar cell polarity effector involved in cilium biogenesis. Proposed to function as core component of the CPLANE (ciliogenesis and planar polarity effectors) complex involved in the recruitment of peripheral IFT-A proteins to basal bodies. May regulate protein and membrane transport to the cilium. May regulate the morphogenesis of hair follicles which depends on functional primary cilia. Binds phosphatidylinositol 3-phosphate with highest affinity, followed by phosphatidylinositol 4-phosphate and phosphatidylinositol 5-phosphate. In Rattus norvegicus (Rat), this protein is Protein fuzzy homolog (Fuz).